We begin with the raw amino-acid sequence, 689 residues long: Glycine--tRNA ligase beta subunit (689 aa).

It belongs to the class-II aminoacyl-tRNA synthetase family. As to quaternary structure, tetramer of two alpha and two beta subunits.

It is found in the cytoplasm. It carries out the reaction tRNA(Gly) + glycine + ATP = glycyl-tRNA(Gly) + AMP + diphosphate. In Coxiella burnetii (strain Dugway 5J108-111), this protein is Glycine--tRNA ligase beta subunit.